We begin with the raw amino-acid sequence, 234 residues long: Small ribosomal subunit protein uS2 (234 aa).

The protein belongs to the universal ribosomal protein uS2 family.

The chain is Small ribosomal subunit protein uS2 from Prochlorococcus marinus (strain MIT 9515).